Here is a 200-residue protein sequence, read N- to C-terminus: Ribonuclease HII (200 aa).

Positions 6–200 constitute an RNase H type-2 domain; that stretch reads ESIAGVDEVG…KLFAVHGSLT (195 aa). Residues Asp12, Glu13, and Asp108 each coordinate a divalent metal cation.

This sequence belongs to the RNase HII family. Requires Mn(2+) as cofactor. Mg(2+) is required as a cofactor.

Its subcellular location is the cytoplasm. The enzyme catalyses Endonucleolytic cleavage to 5'-phosphomonoester.. Its function is as follows. Endonuclease that specifically degrades the RNA of RNA-DNA hybrids. This is Ribonuclease HII from Prochlorococcus marinus (strain MIT 9303).